Reading from the N-terminus, the 505-residue chain is Putative thymidine phosphorylase (505 aa).

The protein belongs to the thymidine/pyrimidine-nucleoside phosphorylase family. Type 2 subfamily.

It carries out the reaction thymidine + phosphate = 2-deoxy-alpha-D-ribose 1-phosphate + thymine. The sequence is that of Putative thymidine phosphorylase from Hahella chejuensis (strain KCTC 2396).